We begin with the raw amino-acid sequence, 312 residues long: Glycerol-3-phosphate dehydrogenase [NAD(P)+] (312 aa).

Trp11, Arg30, Arg31, and Lys95 together coordinate NADPH. Residues Lys95, Gly123, and Ser125 each coordinate sn-glycerol 3-phosphate. Ala127 serves as a coordination point for NADPH. Sn-glycerol 3-phosphate-binding residues include Lys177, Asp230, Ser240, Arg241, and Asn242. Lys177 serves as the catalytic Proton acceptor. Arg241 lines the NADPH pocket. 2 residues coordinate NADPH: Val265 and Glu267.

The protein belongs to the NAD-dependent glycerol-3-phosphate dehydrogenase family.

The protein resides in the cytoplasm. The catalysed reaction is sn-glycerol 3-phosphate + NAD(+) = dihydroxyacetone phosphate + NADH + H(+). It catalyses the reaction sn-glycerol 3-phosphate + NADP(+) = dihydroxyacetone phosphate + NADPH + H(+). Its pathway is membrane lipid metabolism; glycerophospholipid metabolism. In terms of biological role, catalyzes the reduction of the glycolytic intermediate dihydroxyacetone phosphate (DHAP) to sn-glycerol 3-phosphate (G3P), the key precursor for phospholipid synthesis. This is Glycerol-3-phosphate dehydrogenase [NAD(P)+] from Helicobacter pylori (strain Shi470).